Reading from the N-terminus, the 229-residue chain is Cytochrome c oxidase subunit 2 (229 aa).

At 1–26 the chain is on the mitochondrial intermembrane side; it reads MSTWANLGLQDSASPLMEQLIFFHDH. A helical membrane pass occupies residues 27–48; it reads ALLILVMITVLVGYLMFMLFFN. Residues 49 to 62 are Mitochondrial matrix-facing; that stretch reads SYVNRFLLHGQLIE. The chain crosses the membrane as a helical span at residues 63-82; it reads MIWTILPAIILLFIAMPSLR. Over 83-229 the chain is Mitochondrial intermembrane; it reads LLYLLDEINE…IKWISNSVNS (147 aa). Cu cation contacts are provided by His161, Cys196, Glu198, Cys200, His204, and Met207. Glu198 is a binding site for Mg(2+).

The protein belongs to the cytochrome c oxidase subunit 2 family. In terms of assembly, component of the cytochrome c oxidase (complex IV, CIV), a multisubunit enzyme composed of a catalytic core of 3 subunits and several supernumerary subunits. The complex exists as a monomer or a dimer and forms supercomplexes (SCs) in the inner mitochondrial membrane with ubiquinol-cytochrome c oxidoreductase (cytochrome b-c1 complex, complex III, CIII). Cu cation serves as cofactor.

The protein localises to the mitochondrion inner membrane. The catalysed reaction is 4 Fe(II)-[cytochrome c] + O2 + 8 H(+)(in) = 4 Fe(III)-[cytochrome c] + 2 H2O + 4 H(+)(out). Its function is as follows. Component of the cytochrome c oxidase, the last enzyme in the mitochondrial electron transport chain which drives oxidative phosphorylation. The respiratory chain contains 3 multisubunit complexes succinate dehydrogenase (complex II, CII), ubiquinol-cytochrome c oxidoreductase (cytochrome b-c1 complex, complex III, CIII) and cytochrome c oxidase (complex IV, CIV), that cooperate to transfer electrons derived from NADH and succinate to molecular oxygen, creating an electrochemical gradient over the inner membrane that drives transmembrane transport and the ATP synthase. Cytochrome c oxidase is the component of the respiratory chain that catalyzes the reduction of oxygen to water. Electrons originating from reduced cytochrome c in the intermembrane space (IMS) are transferred via the dinuclear copper A center (CU(A)) of subunit 2 and heme A of subunit 1 to the active site in subunit 1, a binuclear center (BNC) formed by heme A3 and copper B (CU(B)). The BNC reduces molecular oxygen to 2 water molecules using 4 electrons from cytochrome c in the IMS and 4 protons from the mitochondrial matrix. In Drosophila miranda (Fruit fly), this protein is Cytochrome c oxidase subunit 2 (mt:CoII).